Reading from the N-terminus, the 292-residue chain is Elongation factor Ts (292 aa).

The segment at 82-85 (TDFV) is involved in Mg(2+) ion dislocation from EF-Tu.

It belongs to the EF-Ts family.

It localises to the cytoplasm. Its function is as follows. Associates with the EF-Tu.GDP complex and induces the exchange of GDP to GTP. It remains bound to the aminoacyl-tRNA.EF-Tu.GTP complex up to the GTP hydrolysis stage on the ribosome. The chain is Elongation factor Ts from Bordetella avium (strain 197N).